Reading from the N-terminus, the 512-residue chain is MSIKTEEISSLIKKQLANYQDQISVEETGTVTYVGDGVARADGLENAMAGELLEFENGVYGMAQNLESNDVGIVILGDDTAIREGDTVKRTGRIMEVPVGDALLGRVVDPLGRSIDGLGDIKTDKTRPIERKAPGVMERKSVSQPLQTGIKVIDALVPIGRGQRELIIGDRKTGKTSIAIDTIINQKDQDMICIYVAIGQKESTVRSQVETLRKFGALDYTIVVSASASNPAPLLYIAPYAGAAMGEEFMFGGRDVLIIYDDLSKQADAYRELSLILRRPPGREAYPGDIFYTHSRLLERAARLSDDLGGGSMTALPVIQTQAGDVSAYIPTNVISITDGQIFLDADSFYAGQRPAIDAGTSVSRVGGDAQIKAMKKVSGTLRLDIASYNELAAFAQFGSDLDAATKARLDRGERTMEVLKQGLHAPQPVEQQVVTLYALAHNYLDDVPVDDVLRFESELATFMRSNHQDLYDSIKQSGQLPDGDGLDKALDAFKAGFQTSDQKQDASVAQN.

169–176 (GDRKTGKT) contributes to the ATP binding site.

The protein belongs to the ATPase alpha/beta chains family. In terms of assembly, F-type ATPases have 2 components, CF(1) - the catalytic core - and CF(0) - the membrane proton channel. CF(1) has five subunits: alpha(3), beta(3), gamma(1), delta(1), epsilon(1). CF(0) has three main subunits: a(1), b(2) and c(9-12). The alpha and beta chains form an alternating ring which encloses part of the gamma chain. CF(1) is attached to CF(0) by a central stalk formed by the gamma and epsilon chains, while a peripheral stalk is formed by the delta and b chains.

The protein resides in the cell membrane. The enzyme catalyses ATP + H2O + 4 H(+)(in) = ADP + phosphate + 5 H(+)(out). Produces ATP from ADP in the presence of a proton gradient across the membrane. The alpha chain is a regulatory subunit. The polypeptide is ATP synthase subunit alpha (Limosilactobacillus fermentum (strain NBRC 3956 / LMG 18251) (Lactobacillus fermentum)).